Reading from the N-terminus, the 228-residue chain is RNA chaperone ProQ (228 aa).

Positions 107-178 are disordered; sequence KARVQAQRAE…REEKHTPVSD (72 aa). 2 stretches are compositionally biased toward basic and acidic residues: residues 117–136 and 146–175; these read QQAK…DAPR and RRKE…KHTP.

It belongs to the ProQ family.

It is found in the cytoplasm. Its function is as follows. RNA chaperone with significant RNA binding, RNA strand exchange and RNA duplexing activities. May regulate ProP activity through an RNA-based, post-transcriptional mechanism. This chain is RNA chaperone ProQ, found in Salmonella agona (strain SL483).